The chain runs to 690 residues: Xylosyl- and glucuronyltransferase LARGE2 (690 aa).

At 1-8 the chain is on the cytoplasmic side; that stretch reads MLPRGRPR. The helical; Signal-anchor for type II membrane protein transmembrane segment at 9 to 29 threads the bilayer; that stretch reads AMGAAVLLLLLLLVVGFFLFG. Topologically, residues 30–690 are lumenal; it reads RDPDYGLGTT…TALQQARSRA (661 aa). N-linked (GlcNAc...) asparagine glycans are attached at residues Asn-51 and Asn-78. Positions 68-343 are xylosyltransferase activity; the sequence is LHVAIVCAGY…FLGYDGKLLR (276 aa). Asp-172 and Asp-174 together coordinate Mn(2+). N-linked (GlcNAc...) asparagine glycosylation occurs at Asn-202. The glucuronyltransferase activity stretch occupies residues 344-686; the sequence is RELFGCPNQF…LKYLTALQQA (343 aa). 2 residues coordinate Mn(2+): Asp-492 and Asp-494.

This sequence in the C-terminal section; belongs to the glycosyltransferase 49 family. It in the N-terminal section; belongs to the glycosyltransferase 8 family. Belongs to the glycosyltransferase 8 family. As to quaternary structure, interacts with B4GAT1. It depends on Mn(2+) as a cofactor. Highly expressed in the testis and kidney, but weakly expressed in the heart and brain. Expressed during embryogenesis from 7 dpc.

It is found in the golgi apparatus membrane. The catalysed reaction is 3-O-[beta-D-GlcA-(1-&gt;3)-beta-D-Xyl-(1-&gt;4)-Rib-ol-P-Rib-ol-P-3-beta-D-GalNAc-(1-&gt;3)-beta-D-GlcNAc-(1-&gt;4)-(O-6-P-alpha-D-Man)]-Thr-[protein] + UDP-alpha-D-xylose = 3-O-[alpha-D-Xyl-(1-&gt;3)-beta-D-GlcA-(1-&gt;4)-beta-D-Xyl-(1-&gt;4)-Rib-ol-P-Rib-ol-P-3-beta-D-GalNAc-(1-&gt;3)-beta-D-GlcNAc-(1-&gt;4)-(O-6-P-alpha-D-Man)]-Thr-[protein] + UDP + H(+). The enzyme catalyses 3-O-{(1-&gt;[3)-alpha-D-Xyl-(1-&gt;3)-beta-D-GlcA-(1-&gt;](n)-4)-beta-D-Xyl-(1-&gt;4)-Rib-ol-P-Rib-ol-P-3-beta-D-GalNAc-(1-&gt;3)-beta-D-GlcNAc-(1-&gt;4)-O-6-P-alpha-D-Man}-L-Thr-[protein] + UDP-alpha-D-glucuronate = 3-O-{beta-D-GlcA-(1-&gt;[3)-alpha-D-Xyl-(1-&gt;3)-beta-D-GlcA-(1-&gt;](n)-4)-beta-D-Xyl-(1-&gt;4)-Rib-ol-P-Rib-ol-P-3-beta-D-GalNAc-(1-&gt;3)-beta-D-GlcNAc-(1-&gt;4)-O-6-P-alpha-D-Man}-L-Thr-[protein] + UDP + H(+). It catalyses the reaction 3-O-{beta-D-GlcA-(1-&gt;[3)-alpha-D-Xyl-(1-&gt;3)-beta-D-GlcA-(1-&gt;](n)-4)-beta-D-Xyl-(1-&gt;4)-Rib-ol-P-Rib-ol-P-3-beta-D-GalNAc-(1-&gt;3)-beta-D-GlcNAc-(1-&gt;4)-O-6-P-alpha-D-Man}-L-Thr-[protein] + UDP-alpha-D-xylose = 3-O-{(1-&gt;[3)-alpha-D-Xyl-(1-&gt;3)-beta-D-GlcA-(1-&gt;](n+1)-4)-beta-D-Xyl-(1-&gt;4)-Rib-ol-P-Rib-ol-P-3-beta-D-GalNAc-(1-&gt;3)-beta-D-GlcNAc-(1-&gt;4)-O-6-P-alpha-D-Man}-L-Thr-[protein] + UDP + H(+). Its pathway is protein modification; protein glycosylation. Its function is as follows. Bifunctional glycosyltransferase with both alpha-1,3-xylosyltransferase and beta-1,3-glucuronyltransferase activities involved in the maturation of alpha-dystroglycan (DAG1) by glycosylation leading to DAG1 binding to laminin G-like domain-containing extracellular proteins with high affinity and in a phosphorylated-O-mannosyl trisaccharide dependent manner. Elongates the glucuronyl-beta-1,4-xylose-beta disaccharide primer structure by adding repeating units [-3-Xylose-alpha-1,3-GlcA-beta-1-] to produce a heteropolysaccharide. Supports the maturation of DAG1 more effectively than LARGE1. In addition, can modify both heparan sulfate (HS)- and chondroitin/dermatan sulfate (CS/DS)-proteoglycans (PGs), namely GPC4, with a glycosaminoglycan (GAG)-like polysaccharide composed of xylose and glucuronic acid to confer laminin binding. The protein is Xylosyl- and glucuronyltransferase LARGE2 of Mus musculus (Mouse).